We begin with the raw amino-acid sequence, 287 residues long: Phospholipid phosphatase 2 (287 aa).

Over 1 to 4 (MERR) the chain is Cytoplasmic. A helical membrane pass occupies residues 5–25 (WVFVLLDVLCVLVAALPCAIL). At 26–51 (TFVNTPYKRGFYCGDDSIRYPYRPDT) the chain is on the lumenal side. The chain crosses the membrane as a helical span at residues 52–72 (ITHGLMAGVIITATVILVSAG). At 73-87 (EAYLVYTDRLYSRSD) the chain is on the cytoplasmic side. Residues 88-108 (FNNYLAALYKVVGTFLFGAAV) traverse the membrane as a helical segment. Over 109–161 (SQSLTDLAKYMTGRLRPNFLAVCDPDWSRVNCSAYVQVEVCRGSSANVTESRL) the chain is Lumenal. The segment at 117–125 (KYMTGRLRP) is phosphatase sequence motif I. N-linked (GlcNAc...) asparagine glycans are attached at residues N139 and N155. The helical transmembrane segment at 162–182 (SFYSGHSSFGMYCMVFLALYV) threads the bilayer. Residues 164–167 (YSGH) are phosphatase sequence motif II. H167 functions as the Proton donors in the catalytic mechanism. The Cytoplasmic segment spans residues 183–193 (QARLCWKWARL). A helical membrane pass occupies residues 194 to 211 (LRPTVQFFLVAFALYVGY). At 212–218 (TRVSDHK) the chain is on the lumenal side. The phosphatase sequence motif III stretch occupies residues 212–223 (TRVSDHKHHWSD). The active-site Nucleophile is the H219. The chain crosses the membrane as a helical span at residues 219–239 (HHWSDVLVGLLQGALVASLTV). Residues 240-287 (RYISDFFKARPPQHCPEEEDLERKPSLSLTLALGETDCNHYGYPVSSS) lie on the Cytoplasmic side of the membrane.

The protein belongs to the PA-phosphatase related phosphoesterase family. In terms of assembly, forms functional homodimers and homooligomers. Can also form heterooligomers with PLPP1 and PLPP3. Post-translationally, N-glycosylated.

The protein resides in the membrane. Its subcellular location is the cell membrane. The protein localises to the early endosome membrane. It is found in the endoplasmic reticulum membrane. The enzyme catalyses a 1,2-diacyl-sn-glycero-3-phosphate + H2O = a 1,2-diacyl-sn-glycerol + phosphate. It carries out the reaction 1,2-dihexadecanoyl-sn-glycero-3-phosphate + H2O = 1,2-dihexadecanoyl-sn-glycerol + phosphate. The catalysed reaction is 1,2-di-(9Z-octadecenoyl)-sn-glycero-3-phosphate + H2O = 1,2-di-(9Z-octadecenoyl)-sn-glycerol + phosphate. It catalyses the reaction a monoacyl-sn-glycero-3-phosphate + H2O = a monoacylglycerol + phosphate. The enzyme catalyses (9Z)-octadecenoyl-sn-glycero-3-phosphate + H2O = (9Z-octadecenoyl)-glycerol + phosphate. It carries out the reaction sphing-4-enine 1-phosphate + H2O = sphing-4-enine + phosphate. The catalysed reaction is an N-acylsphing-4-enine 1-phosphate + H2O = an N-acylsphing-4-enine + phosphate. It catalyses the reaction N-(octanoyl)-sphing-4-enine-1-phosphate + H2O = N-octanoylsphing-4-enine + phosphate. The enzyme catalyses N-(9Z-octadecenoyl)-ethanolamine phosphate + H2O = N-(9Z-octadecenoyl) ethanolamine + phosphate. It participates in lipid metabolism; phospholipid metabolism. Its activity is regulated as follows. Magnesium-independent phospholipid phosphatase. Insensitive to N-ethylmaleimide. In terms of biological role, magnesium-independent phospholipid phosphatase that catalyzes the dephosphorylation of a variety of glycerolipid and sphingolipid phosphate esters including phosphatidate/PA, lysophosphatidate/LPA, sphingosine 1-phosphate/S1P and ceramide 1-phosphate/C1P. Has no apparent extracellular phosphatase activity and therefore most probably acts intracellularly. Also acts on N-oleoyl ethanolamine phosphate/N-(9Z-octadecenoyl)-ethanolamine phosphate, a potential physiological compound. Through dephosphorylation of these bioactive lipid mediators produces new bioactive compounds and may regulate signal transduction in different cellular processes. Indirectly regulates, for instance, cell cycle G1/S phase transition through its phospholipid phosphatase activity. In Bos taurus (Bovine), this protein is Phospholipid phosphatase 2.